We begin with the raw amino-acid sequence, 362 residues long: D-alanine--D-alanine ligase (362 aa).

The region spanning 134-345 (KILAQRAGVP…YPDLITRLIR (212 aa)) is the ATP-grasp domain. 170–225 (GQLGTSNLFVKPSNQGSSVGITHVTDDSNYAEALAEAFKYDDKVLVEEGIVGTEVE) is a binding site for ATP. Asp-298, Glu-312, and Asn-314 together coordinate Mg(2+).

This sequence belongs to the D-alanine--D-alanine ligase family. The cofactor is Mg(2+). Requires Mn(2+) as cofactor.

Its subcellular location is the cytoplasm. The enzyme catalyses 2 D-alanine + ATP = D-alanyl-D-alanine + ADP + phosphate + H(+). Its pathway is cell wall biogenesis; peptidoglycan biosynthesis. In terms of biological role, cell wall formation. The chain is D-alanine--D-alanine ligase from Lactobacillus delbrueckii subsp. bulgaricus (strain ATCC BAA-365 / Lb-18).